Consider the following 209-residue polypeptide: COP9 signalosome complex subunit 8 (209 aa).

One can recognise a PCI domain in the interval 8–179 (ESAFSFKKLL…GALDVSFNKF (172 aa)). Position 175 is a phosphoserine (serine 175).

Belongs to the CSN8 family. In terms of assembly, component of the CSN complex, composed of COPS1/GPS1, COPS2, COPS3, COPS4, COPS5, COPS6, COPS7 (COPS7A or COPS7B), COPS8 and COPS9. In the complex, it probably interacts directly with COPS3, COPS4 and COPS7 (COPS7A or COPS7B).

The protein resides in the cytoplasm. Its subcellular location is the nucleus. Component of the COP9 signalosome complex (CSN), a complex involved in various cellular and developmental processes. The CSN complex is an essential regulator of the ubiquitin (Ubl) conjugation pathway by mediating the deneddylation of the cullin subunits of SCF-type E3 ligase complexes, leading to decrease the Ubl ligase activity of SCF-type complexes such as SCF, CSA or DDB2. The complex is also involved in phosphorylation of p53/TP53, c-jun/JUN, IkappaBalpha/NFKBIA, ITPK1 and IRF8/ICSBP, possibly via its association with CK2 and PKD kinases. CSN-dependent phosphorylation of TP53 and JUN promotes and protects degradation by the Ubl system, respectively. This is COP9 signalosome complex subunit 8 (COPS8) from Pongo abelii (Sumatran orangutan).